The chain runs to 494 residues: Tripartite motif-containing protein 5 (494 aa).

At Ala2 the chain carries N-acetylalanine. An RING-type zinc finger spans residues Cys15–Arg59. Phosphoserine is present on Ser86. The B box-type zinc finger occupies Gln91–Val132. 4 residues coordinate Zn(2+): Cys96, His99, Cys118, and His124. A coiled-coil region spans residues Leu131–Ala223. The required for interaction with GABARAP and for autophagy stretch occupies residues Phe186–Lys199. The B30.2/SPRY domain occupies Pro280–Ser494.

It belongs to the TRIM/RBCC family. As to quaternary structure, can form homodimers and homotrimers. In addition to lower-order dimerization, also exhibits a higher-order multimerization and both low- and high-order multimerizations are essential for its restriction activity. Interacts with BTBD1 and BTBD2. Interacts with PSMC4, PSMC5, PSMD7 and HSPA8/HSC70. Interacts (via B30.2/SPRY domain) with HSPA1A/B. Interacts with PSMC2, MAP3K7/TAK1, TAB2 and TAB3. Interacts with SQSTM1. Interacts with TRIM6 and TRIM34. Interacts with ULK1 (phosphorylated form), GABARAP, GABARAPL1, GABARAPL2, MAP1LC3A, MAP1LC3C and BECN1. In terms of processing, degraded in a proteasome-independent fashion in the absence of viral infection but in a proteasome-dependent fashion following exposure to restriction sensitive virus. Autoubiquitinated in a RING finger- and UBE2D2-dependent manner. Monoubiquitinated by TRIM21. Deubiquitinated by Yersinia YopJ. Ubiquitination may not lead to proteasomal degradation.

The protein resides in the cytoplasm. It is found in the nucleus. It catalyses the reaction S-ubiquitinyl-[E2 ubiquitin-conjugating enzyme]-L-cysteine + [acceptor protein]-L-lysine = [E2 ubiquitin-conjugating enzyme]-L-cysteine + N(6)-ubiquitinyl-[acceptor protein]-L-lysine.. The protein operates within protein modification; protein ubiquitination. Capsid-specific restriction factor that prevents infection from non-host-adapted retroviruses. Blocks viral replication early in the life cycle, after viral entry but before reverse transcription. In addition to acting as a capsid-specific restriction factor, also acts as a pattern recognition receptor that activates innate immune signaling in response to the retroviral capsid lattice. Binding to the viral capsid triggers its E3 ubiquitin ligase activity, and in concert with the heterodimeric ubiquitin conjugating enzyme complex UBE2V1-UBE2N (also known as UBC13-UEV1A complex) generates 'Lys-63'-linked polyubiquitin chains, which in turn are catalysts in the autophosphorylation of the MAP3K7/TAK1 complex (includes TAK1, TAB2, and TAB3). Activation of the MAP3K7/TAK1 complex by autophosphorylation results in the induction and expression of NF-kappa-B and MAPK-responsive inflammatory genes, thereby leading to an innate immune response in the infected cell. Plays a role in regulating autophagy through activation of autophagy regulator BECN1 by causing its dissociation from its inhibitors BCL2 and TAB2. In Saguinus oedipus (Cotton-top tamarin), this protein is Tripartite motif-containing protein 5 (TRIM5).